Here is a 993-residue protein sequence, read N- to C-terminus: Protein translocase subunit SecA (993 aa).

Residues Gln102, 120–124 (GEGKT), and Asp523 contribute to the ATP site. A disordered region spans residues 910-962 (ENAPEPQISGGNGQQPPQRRQQTSLDDLEKQFERKKKRELEQARMAGGGMPDA). Residues 936 to 951 (DLEKQFERKKKRELEQ) show a composition bias toward basic and acidic residues. Residues Cys979, Cys981, Cys990, and His991 each coordinate Zn(2+).

It belongs to the SecA family. Monomer and homodimer. Part of the essential Sec protein translocation apparatus which comprises SecA, SecYEG and auxiliary proteins SecDF. Other proteins may also be involved. Zn(2+) serves as cofactor.

Its subcellular location is the cell inner membrane. It localises to the cytoplasm. It carries out the reaction ATP + H2O + cellular proteinSide 1 = ADP + phosphate + cellular proteinSide 2.. Its function is as follows. Part of the Sec protein translocase complex. Interacts with the SecYEG preprotein conducting channel. Has a central role in coupling the hydrolysis of ATP to the transfer of proteins into and across the cell membrane, serving as an ATP-driven molecular motor driving the stepwise translocation of polypeptide chains across the membrane. The chain is Protein translocase subunit SecA from Koribacter versatilis (strain Ellin345).